The chain runs to 601 residues: NAD(+)--arginine ADP-ribosyltransferase Chelt (601 aa).

A signal peptide spans 1–18; the sequence is MKTIISLIFIMFPLFVSA. Residues 26-43 and E130 contribute to the NAD(+) site; that span reads ADSR…LYPR. The active site involves E130. Residues C205 and C220 are joined by a disulfide bond.

It belongs to the enterotoxin A family.

The protein localises to the secreted. The enzyme catalyses L-arginyl-[protein] + NAD(+) = N(omega)-(ADP-D-ribosyl)-L-arginyl-[protein] + nicotinamide + H(+). Functionally, a probable mono(ADP-ribosyl)transferase, it may ADP-ribosylate Arg in target protein(s). Upon expression in yeast cells causes cell death. This chain is NAD(+)--arginine ADP-ribosyltransferase Chelt, found in Vibrio cholerae.